We begin with the raw amino-acid sequence, 287 residues long: uncharacterized protein (287 aa).

Residues 1-20 (MKVICGSVFLFSLFFQVVLG) form the signal peptide. Topologically, residues 22–201 (YFSSSSGNPN…AFYGPRRNIK (180 aa)) are extracellular. Residues Asn-120, Asn-154, and Asn-166 are each glycosylated (N-linked (GlcNAc...) asparagine). The chain crosses the membrane as a helical span at residues 202 to 222 (AAIAVPSVILGLILVALVYYA). At 223–287 (YRKDTWKIYM…YYQSQVKKFH (65 aa)) the chain is on the cytoplasmic side.

It is found in the membrane. This is an uncharacterized protein from Schizosaccharomyces pombe (strain 972 / ATCC 24843) (Fission yeast).